We begin with the raw amino-acid sequence, 338 residues long: Tetraacyldisaccharide 4'-kinase (338 aa).

ATP is bound at residue 49 to 56 (TVGGTGKT).

It belongs to the LpxK family.

It carries out the reaction a lipid A disaccharide + ATP = a lipid IVA + ADP + H(+). Its pathway is glycolipid biosynthesis; lipid IV(A) biosynthesis; lipid IV(A) from (3R)-3-hydroxytetradecanoyl-[acyl-carrier-protein] and UDP-N-acetyl-alpha-D-glucosamine: step 6/6. Its function is as follows. Transfers the gamma-phosphate of ATP to the 4'-position of a tetraacyldisaccharide 1-phosphate intermediate (termed DS-1-P) to form tetraacyldisaccharide 1,4'-bis-phosphate (lipid IVA). In Geobacter metallireducens (strain ATCC 53774 / DSM 7210 / GS-15), this protein is Tetraacyldisaccharide 4'-kinase.